The following is a 211-amino-acid chain: Uracil phosphoribosyltransferase (211 aa).

5-phospho-alpha-D-ribose 1-diphosphate contacts are provided by residues Arg-78, Arg-103, and 130–138 (DPMLATGNS). Uracil-binding positions include Ile-193 and 198–200 (GDA). Asp-199 is a 5-phospho-alpha-D-ribose 1-diphosphate binding site.

The protein belongs to the UPRTase family. The cofactor is Mg(2+).

The catalysed reaction is UMP + diphosphate = 5-phospho-alpha-D-ribose 1-diphosphate + uracil. It participates in pyrimidine metabolism; UMP biosynthesis via salvage pathway; UMP from uracil: step 1/1. Allosterically activated by GTP. Its function is as follows. Catalyzes the conversion of uracil and 5-phospho-alpha-D-ribose 1-diphosphate (PRPP) to UMP and diphosphate. This chain is Uracil phosphoribosyltransferase, found in Acinetobacter baumannii (strain ATCC 17978 / DSM 105126 / CIP 53.77 / LMG 1025 / NCDC KC755 / 5377).